The sequence spans 468 residues: Glutamate--tRNA ligase (468 aa).

The 'HIGH' region motif lies at Pro8–Gly18. The Zn(2+) site is built by Cys97, Cys99, Cys124, and Asp126. The short motif at Lys236–Arg240 is the 'KMSKS' region element. Position 239 (Lys239) interacts with ATP.

Belongs to the class-I aminoacyl-tRNA synthetase family. Glutamate--tRNA ligase type 1 subfamily. Monomer. Zn(2+) serves as cofactor.

The protein resides in the cytoplasm. It carries out the reaction tRNA(Glu) + L-glutamate + ATP = L-glutamyl-tRNA(Glu) + AMP + diphosphate. Catalyzes the attachment of glutamate to tRNA(Glu) in a two-step reaction: glutamate is first activated by ATP to form Glu-AMP and then transferred to the acceptor end of tRNA(Glu). This Francisella tularensis subsp. holarctica (strain FTNF002-00 / FTA) protein is Glutamate--tRNA ligase.